The sequence spans 282 residues: Bicarbonate transport ATP-binding protein CmpD (282 aa).

The region spanning 24-257 (LTIENVSKVY…RPRDRDRIME (234 aa)) is the ABC transporter domain. Position 60–67 (60–67 (GHSGCGKS)) interacts with ATP.

It belongs to the ABC transporter superfamily. Nitrate/nitrite/cyanate uptake transporter (NitT) (TC 3.A.1.16) family. In terms of assembly, the complex is composed of two ATP-binding proteins (CmpC and CmpD), a transmembrane protein (CmpB) and a solute-binding protein (CmpA).

It is found in the cell inner membrane. Functionally, part of the ABC transporter complex CmpABCD involved in bicarbonate transport. Responsible for energy coupling to the transport system. This Synechocystis sp. (strain ATCC 27184 / PCC 6803 / Kazusa) protein is Bicarbonate transport ATP-binding protein CmpD (cmpD).